Consider the following 390-residue polypeptide: Succinate--CoA ligase [ADP-forming] subunit beta (390 aa).

Residues 9–245 (KELLSRYGLP…KSQENEREVK (237 aa)) form the ATP-grasp domain. Residues Lys46, 53-55 (GRG), Glu100, Tyr103, and Glu108 each bind ATP. Mg(2+)-binding residues include Asn200 and Asp214. Residues Asn265 and 322 to 324 (GIV) contribute to the substrate site.

Belongs to the succinate/malate CoA ligase beta subunit family. In terms of assembly, heterotetramer of two alpha and two beta subunits. Requires Mg(2+) as cofactor.

The enzyme catalyses succinate + ATP + CoA = succinyl-CoA + ADP + phosphate. It catalyses the reaction GTP + succinate + CoA = succinyl-CoA + GDP + phosphate. It participates in carbohydrate metabolism; tricarboxylic acid cycle; succinate from succinyl-CoA (ligase route): step 1/1. Its function is as follows. Succinyl-CoA synthetase functions in the citric acid cycle (TCA), coupling the hydrolysis of succinyl-CoA to the synthesis of either ATP or GTP and thus represents the only step of substrate-level phosphorylation in the TCA. The beta subunit provides nucleotide specificity of the enzyme and binds the substrate succinate, while the binding sites for coenzyme A and phosphate are found in the alpha subunit. This Chromobacterium violaceum (strain ATCC 12472 / DSM 30191 / JCM 1249 / CCUG 213 / NBRC 12614 / NCIMB 9131 / NCTC 9757 / MK) protein is Succinate--CoA ligase [ADP-forming] subunit beta.